A 258-amino-acid polypeptide reads, in one-letter code: UBX domain-containing protein 2A (258 aa).

Over residues 1 to 14 (MKEVDNLDSIKEEW) the composition is skewed to basic and acidic residues. The interval 1–30 (MKEVDNLDSIKEEWACETGPPDSQPLNDNQ) is disordered. Residues 1–152 (MKEVDNLDSI…SATPRIVSKA (152 aa)) are required for interaction with CHRNA3. The tract at residues 1–165 (MKEVDNLDSI…EVDNKSTLSA (165 aa)) is required for inhibition of CHRNA3 ubiquitination and translocation of CHRNA3 to the plasma membrane resulting in an increase in acetylcholine-gated nicotinic acetylcholine receptor currents. Residues 61 to 125 (QVDVNIKLWK…VEDKKNEVCM (65 aa)) enclose the SEP domain. Residues 168 to 258 (LNNLEPITRI…QKTAEPFRKL (91 aa)) form a required for interaction with VCP region. Residues 170–247 (NLEPITRIQI…DLKNAVIIQR (78 aa)) form the UBX domain.

In terms of assembly, part of a complex composed of STUB1/CHIP, VCP/p97, CHRNA3, and UBXN2A that modulates the ubiquitination and endoplasmic reticulum-associated degradation (ERAD) of CHRNA3. Within the complex UBXN2A acts as a scaffold protein required for the interaction of CHRNA3 with VCP/p97, this interaction also inhibits CHRNA3 ubiquitination by STUB1/CHIP and subsequently ERAD. Interacts (via SEP domain) with CHRNA3 and interacts (via UBX domain) with VCP/P97; these interactions are required for the interaction of CHRNA3 with the STUB1-VCP-UBXN2A complex. Interacts with HSPA9/MOT-2 (via SBD domain); the interaction inhibits HSPA9/MOT-2 interaction with and degradation of p53, thereby promotes p53 translocation to the nucleus. Interacts with RICTOR. Ubiquitinated. As to expression, expressed in the prefrontal cortex (at protein level). Expressed in the habenula and hippocampus (at protein level). Expressed in peripheral ganglia.

The protein resides in the golgi apparatus. It localises to the endoplasmic reticulum. It is found in the perikaryon. Its subcellular location is the cell projection. The protein localises to the dendrite. The protein resides in the nucleus. It localises to the cytoplasm. Functionally, acts to repress the ubiquitination and subsequent endoplasmic reticulum-associated degradation of CHRNA3 by the STUB1-VCP-UBXN2A complex in cortical neurons. Also acts to promote the translocation of CHRNA3 to the plasma membrane and subsequently increases plasma membrane acetylcholine-gated ion-channel activation. Plays a role in the inhibition of STUB1-mediated TP53 degradation, via its interaction with HSPA9 which acts to inhibit TP53 binding to HSPA9. Positively mediates the ubiquitination and proteosomal degradation of RICTOR, may thereby act as a negative regulator of the mTORC2 pathway. In Mus musculus (Mouse), this protein is UBX domain-containing protein 2A.